We begin with the raw amino-acid sequence, 147 residues long: Secreted hemophore CSA2 (147 aa).

A signal peptide spans 1–20 (MKFSTILAIPFAIAFANAAA). Residues 34 to 145 (NPYTIYPPVP…SALDAAATAT (112 aa)) enclose the CFEM domain. Disulfide bonds link C62–C102, C66–C97, C76–C83, and C85–C118. Residue D80 participates in heme binding.

The protein belongs to the RBT5 family. Homodimer. The possibility of a transient honotrimer assembly of the holo protein is not ruled out.

The protein localises to the secreted. Secreted heme-binding protein involved in the utilization of iron from human hemoglobin during hyphal growth. May also play a role in non-hemoglobin iron utilization. Heme transfer occurs between PGA7, RBT5 and CSA2 supporting a model in which the 3 CFEM proteins cooperate in a heme-acquisition system and form a cross-cell wall heme-transfer cascade. The ability to acquire iron from host tissues is a major virulence factor of pathogenic microorganisms. This is Secreted hemophore CSA2 (CSA2) from Candida albicans (strain SC5314 / ATCC MYA-2876) (Yeast).